Here is a 380-residue protein sequence, read N- to C-terminus: Set1 complex component swd3 (380 aa).

WD repeat units follow at residues 52-91 (GHEK…LECT), 94-133 (GHYR…SVRC), 136-177 (GHTN…RMLP), 179-219 (HSEP…KTLV), 221-262 (PINV…RIFD), 291-330 (NDSS…IIDD), and 335-374 (SDDP…SKHE). Ser-379 carries the post-translational modification Phosphoserine.

In terms of assembly, component of the Set1 complex composed of ash2, sdc1, set1, shg1, spp1, swd1, swd2 and swd3.

The protein resides in the nucleus. Functionally, the Set1 complex specifically methylates 'Lys-4' of histone H3. In Schizosaccharomyces pombe (strain 972 / ATCC 24843) (Fission yeast), this protein is Set1 complex component swd3.